The primary structure comprises 413 residues: Serine hydroxymethyltransferase (413 aa).

(6S)-5,6,7,8-tetrahydrofolate is bound by residues Leu117 and 121-123 (GHL). Lys226 bears the N6-(pyridoxal phosphate)lysine mark. (6S)-5,6,7,8-tetrahydrofolate is bound by residues Glu239 and 349 to 351 (SPF).

Belongs to the SHMT family. As to quaternary structure, homodimer. Pyridoxal 5'-phosphate serves as cofactor.

The protein resides in the cytoplasm. The enzyme catalyses (6R)-5,10-methylene-5,6,7,8-tetrahydrofolate + glycine + H2O = (6S)-5,6,7,8-tetrahydrofolate + L-serine. The protein operates within one-carbon metabolism; tetrahydrofolate interconversion. Its pathway is amino-acid biosynthesis; glycine biosynthesis; glycine from L-serine: step 1/1. Its function is as follows. Catalyzes the reversible interconversion of serine and glycine with tetrahydrofolate (THF) serving as the one-carbon carrier. This reaction serves as the major source of one-carbon groups required for the biosynthesis of purines, thymidylate, methionine, and other important biomolecules. Also exhibits THF-independent aldolase activity toward beta-hydroxyamino acids, producing glycine and aldehydes, via a retro-aldol mechanism. This is Serine hydroxymethyltransferase from Bacillus cereus (strain AH820).